Consider the following 449-residue polypeptide: Chromosomal replication initiator protein DnaA (449 aa).

A domain I, interacts with DnaA modulators region spans residues 1–83 (MDDSLWSACL…VELEIGSPPT (83 aa)). A disordered region spans residues 77–114 (EIGSPPTPDQREAATGATRAAPAQRSSEPRQRPVDSNL). Residues 83–112 (TPDQREAATGATRAAPAQRSSEPRQRPVDS) form a domain II region. Low complexity predominate over residues 89–99 (AATGATRAAPA). Residues 113 to 329 (NLNPGFTFDS…GALRRITANA (217 aa)) form a domain III, AAA+ region region. 4 residues coordinate ATP: Gly157, Gly159, Lys160, and Thr161. Residues 330–449 (QFTGRAIDVD…YDNLLRTLST (120 aa)) form a domain IV, binds dsDNA region.

It belongs to the DnaA family. In terms of assembly, oligomerizes as a right-handed, spiral filament on DNA at oriC.

Its subcellular location is the cytoplasm. Its function is as follows. Plays an essential role in the initiation and regulation of chromosomal replication. ATP-DnaA binds to the origin of replication (oriC) to initiate formation of the DNA replication initiation complex once per cell cycle. Binds the DnaA box (a 9 base pair repeat at the origin) and separates the double-stranded (ds)DNA. Forms a right-handed helical filament on oriC DNA; dsDNA binds to the exterior of the filament while single-stranded (ss)DNA is stabiized in the filament's interior. The ATP-DnaA-oriC complex binds and stabilizes one strand of the AT-rich DNA unwinding element (DUE), permitting loading of DNA polymerase. After initiation quickly degrades to an ADP-DnaA complex that is not apt for DNA replication. Binds acidic phospholipids. The chain is Chromosomal replication initiator protein DnaA from Halorhodospira halophila (strain DSM 244 / SL1) (Ectothiorhodospira halophila (strain DSM 244 / SL1)).